Consider the following 187-residue polypeptide: Glutathione peroxidase 7 (187 aa).

The signal sequence occupies residues 1–19; sequence MVAATVAAAWLLLWAAACA. Cys-57 is an active-site residue.

Belongs to the glutathione peroxidase family. As to expression, expressed in esophageal epithelial cells; expression is up-regulated after exposure to acidic bile acids.

Its subcellular location is the secreted. It catalyses the reaction 2 glutathione + H2O2 = glutathione disulfide + 2 H2O. It protects esophageal epithelia from hydrogen peroxide-induced oxidative stress. It suppresses acidic bile acid-induced reactive oxygen species (ROS) and protects against oxidative DNA damage and double-strand breaks. The chain is Glutathione peroxidase 7 (GPX7) from Homo sapiens (Human).